A 132-amino-acid polypeptide reads, in one-letter code: Large-conductance mechanosensitive channel (132 aa).

Transmembrane regions (helical) follow at residues 14–34, 38–58, and 67–87; these read VVDLAVGVVIGAAFGKIVSSL, IITPLLGMVLGGVDFTSLHFG, and GNFIQTIFDFLIIAASIFMFV.

This sequence belongs to the MscL family. In terms of assembly, homopentamer.

It localises to the cell membrane. Functionally, channel that opens in response to stretch forces in the membrane lipid bilayer. May participate in the regulation of osmotic pressure changes within the cell. The protein is Large-conductance mechanosensitive channel of Bacillus cereus (strain B4264).